We begin with the raw amino-acid sequence, 289 residues long: Rhomboid-type serine protease 2 (289 aa).

6 consecutive transmembrane segments (helical) span residues 26–46 (VVII…VDIQ), 67–87 (FPFI…LTPL), 100–120 (CLAL…IGLE), 122–142 (FVFG…LLLG), 157–179 (IGTY…AVLV), and 184–203 (FWGH…SSTL). Serine 134 acts as the Nucleophile in catalysis. Residue histidine 187 is part of the active site.

Belongs to the peptidase S54 family.

The protein resides in the golgi apparatus membrane. The protein localises to the golgi apparatus. It localises to the cis-Golgi network membrane. It carries out the reaction Cleaves type-1 transmembrane domains using a catalytic dyad composed of serine and histidine that are contributed by different transmembrane domains.. Its function is as follows. Probable rhomboid-type serine protease that catalyzes intramembrane proteolysis. The sequence is that of Rhomboid-type serine protease 2 (RBD2) from Podospora anserina (Pleurage anserina).